The chain runs to 461 residues: MPKMFGTDGVRGLANRDLTARLALDLGDAAVRVLGDAGTQDDQPEGRRRALVGRDTRVSGDFLASALSAGMSAGGFDVIDAGIIPTPGVAYLTSVLNVEIGAVISASHNPMPDNGIKFFARGGFKLPDQKEDDIEAVLGQDWDRPTGAGVGRVSHDQTTATNLYIDHLVATIAPLNDDKTQPKPLKGLKIVADCANGATSVVAPEALRRAGADVIVINASPDGYNINKNAGSTHPEQLQAMVKATDAVMGVAFDGDADRCLAVDEDGNMINGDQIMGILARAKQREGKLNHDTLVVTVMSNLGLKLALKDMGIKTVETAVGDRYVLEEMLKGGYSLGGEQSGHVINREFATTGDGTLTALTLCNEVVKSGKSLKELAADFPQLPQTLINVPNVDKKAAATNKRIQDAVAREEELLGDTGRVLLRPSGTEPLVRVMAEAATQAYADEVCTRLAKIVAEELAL.

Residue S107 is the Phosphoserine intermediate of the active site. Mg(2+) is bound by residues S107, D254, D256, and D258. S107 carries the phosphoserine modification.

This sequence belongs to the phosphohexose mutase family. Requires Mg(2+) as cofactor. In terms of processing, activated by phosphorylation.

The catalysed reaction is alpha-D-glucosamine 1-phosphate = D-glucosamine 6-phosphate. Catalyzes the conversion of glucosamine-6-phosphate to glucosamine-1-phosphate. The polypeptide is Phosphoglucosamine mutase (Bifidobacterium longum subsp. infantis (strain ATCC 15697 / DSM 20088 / JCM 1222 / NCTC 11817 / S12)).